The sequence spans 133 residues: Sporulation-specific protein 2 (133 aa).

The protein belongs to the VPS13 family. Interacts with spo13 and spo15.

It is found in the cytoplasm. The protein resides in the cytoskeleton. Its subcellular location is the microtubule organizing center. The protein localises to the spindle pole body. Functionally, involved in sporulation. Plays a significant role in modification of the spindle pole body prior to spore formation and is required for initiating forespore membrane formation. Assists in the localization of spo13 to the outer surface of the SPB. In Schizosaccharomyces pombe (strain 972 / ATCC 24843) (Fission yeast), this protein is Sporulation-specific protein 2 (spo2).